The chain runs to 336 residues: tRNA N6-adenosine threonylcarbamoyltransferase (336 aa).

Fe cation-binding residues include His111 and His115. Substrate-binding positions include 134-138 (VVSGG), Asp167, Gly180, Asp184, and Asn272. Asp300 contributes to the Fe cation binding site.

The protein belongs to the KAE1 / TsaD family. Fe(2+) is required as a cofactor.

The protein resides in the cytoplasm. It catalyses the reaction L-threonylcarbamoyladenylate + adenosine(37) in tRNA = N(6)-L-threonylcarbamoyladenosine(37) in tRNA + AMP + H(+). Functionally, required for the formation of a threonylcarbamoyl group on adenosine at position 37 (t(6)A37) in tRNAs that read codons beginning with adenine. Is involved in the transfer of the threonylcarbamoyl moiety of threonylcarbamoyl-AMP (TC-AMP) to the N6 group of A37, together with TsaE and TsaB. TsaD likely plays a direct catalytic role in this reaction. The protein is tRNA N6-adenosine threonylcarbamoyltransferase of Caldicellulosiruptor saccharolyticus (strain ATCC 43494 / DSM 8903 / Tp8T 6331).